A 578-amino-acid chain; its full sequence is Proline--tRNA ligase (578 aa).

This sequence belongs to the class-II aminoacyl-tRNA synthetase family. ProS type 1 subfamily. Homodimer.

Its subcellular location is the cytoplasm. The catalysed reaction is tRNA(Pro) + L-proline + ATP = L-prolyl-tRNA(Pro) + AMP + diphosphate. In terms of biological role, catalyzes the attachment of proline to tRNA(Pro) in a two-step reaction: proline is first activated by ATP to form Pro-AMP and then transferred to the acceptor end of tRNA(Pro). As ProRS can inadvertently accommodate and process non-cognate amino acids such as alanine and cysteine, to avoid such errors it has two additional distinct editing activities against alanine. One activity is designated as 'pretransfer' editing and involves the tRNA(Pro)-independent hydrolysis of activated Ala-AMP. The other activity is designated 'posttransfer' editing and involves deacylation of mischarged Ala-tRNA(Pro). The misacylated Cys-tRNA(Pro) is not edited by ProRS. The protein is Proline--tRNA ligase of Burkholderia lata (strain ATCC 17760 / DSM 23089 / LMG 22485 / NCIMB 9086 / R18194 / 383).